The chain runs to 852 residues: Homeobox-leucine zipper protein ATHB-14 (852 aa).

The tract at residues 1–25 (MMMVHSMSRDMMNRESPDKGLDSGK) is disordered. Basic and acidic residues predominate over residues 7–22 (MSRDMMNRESPDKGLD). The homeobox DNA-binding region spans 22-85 (DSGKYVRYTP…NRRCREKQRK (64 aa)). Residues 80 to 122 (REKQRKEAARLQTVNRKLNAMNKLLMEENDRLQKQVSNLVYEN) adopt a coiled-coil conformation. The interval 80–130 (REKQRKEAARLQTVNRKLNAMNKLLMEENDRLQKQVSNLVYENGHMKHQLH) is ZIP domain. Positions 130-148 (HTASGTTTDNSCESVVVSG) are enriched in polar residues. A disordered region spans residues 130–166 (HTASGTTTDNSCESVVVSGQQHQQQNPNPQHQQRDAN). The segment covering 149–160 (QQHQQQNPNPQH) has biased composition (low complexity). The START domain maps to 164-392 (DANNPAGLLS…IAQETSGEVQ (229 aa)).

It belongs to the HD-ZIP homeobox family. Class III subfamily. In terms of assembly, homodimer. Heterodimer with ZPR3. Interacts with ESR1 and ESR2. Interacts with ZPR3. As to expression, expressed in the center of the meristem and on the adaxial side of the leaves.

The protein localises to the nucleus. Its activity is regulated as follows. Inhibited by ZPR3. Probable transcription factor involved in the determination of adaxial-abaxial polarity in ovule primordium. Specifies adaxial leaf fates. The sequence is that of Homeobox-leucine zipper protein ATHB-14 (ATHB-14) from Arabidopsis thaliana (Mouse-ear cress).